A 166-amino-acid polypeptide reads, in one-letter code: Orotate phosphoribosyltransferase (166 aa).

Residues arginine 83, lysine 84, histidine 89, and 109–117 (DDVATTGGS) each bind 5-phospho-alpha-D-ribose 1-diphosphate. Positions 113 and 141 each coordinate orotate.

Belongs to the purine/pyrimidine phosphoribosyltransferase family. PyrE subfamily. As to quaternary structure, homodimer. Mg(2+) serves as cofactor.

The catalysed reaction is orotidine 5'-phosphate + diphosphate = orotate + 5-phospho-alpha-D-ribose 1-diphosphate. It functions in the pathway pyrimidine metabolism; UMP biosynthesis via de novo pathway; UMP from orotate: step 1/2. Catalyzes the transfer of a ribosyl phosphate group from 5-phosphoribose 1-diphosphate to orotate, leading to the formation of orotidine monophosphate (OMP). This chain is Orotate phosphoribosyltransferase, found in Picrophilus torridus (strain ATCC 700027 / DSM 9790 / JCM 10055 / NBRC 100828 / KAW 2/3).